The chain runs to 441 residues: Ribosomal protein uS12 methylthiotransferase RimO (441 aa).

Residues 8 to 118 (PKIGFVSLGC…VLQHVHHYVP (111 aa)) enclose the MTTase N-terminal domain. [4Fe-4S] cluster is bound by residues cysteine 17, cysteine 53, cysteine 82, cysteine 150, cysteine 154, and cysteine 157. The Radical SAM core domain occupies 136 to 373 (LTPRHYAYLK…MQLQQQISAE (238 aa)). One can recognise a TRAM domain in the interval 376-441 (QEKVGREILV…DEYDLWGSRV (66 aa)).

It belongs to the methylthiotransferase family. RimO subfamily. [4Fe-4S] cluster serves as cofactor.

The protein resides in the cytoplasm. It catalyses the reaction L-aspartate(89)-[ribosomal protein uS12]-hydrogen + (sulfur carrier)-SH + AH2 + 2 S-adenosyl-L-methionine = 3-methylsulfanyl-L-aspartate(89)-[ribosomal protein uS12]-hydrogen + (sulfur carrier)-H + 5'-deoxyadenosine + L-methionine + A + S-adenosyl-L-homocysteine + 2 H(+). Its function is as follows. Catalyzes the methylthiolation of an aspartic acid residue of ribosomal protein uS12. This is Ribosomal protein uS12 methylthiotransferase RimO from Salmonella typhi.